We begin with the raw amino-acid sequence, 311 residues long: Asialoglycoprotein receptor 2 (311 aa).

The segment at Met1–Pro44 is disordered. Residues Met1–Cys58 lie on the Cytoplasmic side of the membrane. The Endocytosis signal motif lies at Phe5–Ile8. At Ser13 the chain carries Phosphoserine. Cys54 carries the S-palmitoyl cysteine lipid modification. The helical; Signal-anchor for type II membrane protein transmembrane segment at Phe59–Ser79 threads the bilayer. Over Gln80–Ala311 the chain is Extracellular. N-linked (GlcNAc...) asparagine glycosylation is found at Asn102 and Asn170. A C-type lectin domain is found at Cys176–Lys302. 3 disulfide bridges follow: Cys177-Cys188, Cys205-Cys300, and Cys278-Cys292. Residue Asn305 is glycosylated (N-linked (GlcNAc...) asparagine).

In terms of assembly, the functioning ligand-binding unit of this receptor is thought to be at least a dimer. Interacts with LASS2. As to quaternary structure, (Microbial infection) Interacts with hepatitis E virus capsid protein ORF2. In terms of tissue distribution, expressed exclusively in hepatic parenchymal cells.

It localises to the membrane. Functionally, mediates the endocytosis of plasma glycoproteins to which the terminal sialic acid residue on their complex carbohydrate moieties has been removed. The receptor recognizes terminal galactose and N-acetylgalactosamine units. After ligand binding to the receptor, the resulting complex is internalized and transported to a sorting organelle, where receptor and ligand are disassociated. The receptor then returns to the cell membrane surface. In Homo sapiens (Human), this protein is Asialoglycoprotein receptor 2 (ASGR2).